The primary structure comprises 419 residues: 20-hydroxy-prefusarin hydrolase FUS2 (419 aa).

Serine 238 is a catalytic residue.

This sequence belongs to the AB hydrolase superfamily. FUS2 hydrolase family.

It participates in mycotoxin biosynthesis. Functionally, 20-hydroxy-prefusarin hydrolase; part of the gene cluster that mediates the biosynthesis of the mycotoxin fusarin C. Within the cluster, FUS1, FUS2, FUS8 and FUS9 are sufficient for fusarin production. The roles of the other FUS members are yet undetermined. The fusarin C synthetase FUS1 is responsible for the condensation of one acetyl-coenzyme A (CoA) unit with six malonyl-CoA units and the amide linkage of the arising heptaketide and homoserine, subsequently releasing the first intermediate, prefusarin, as an alcohol with an open ring structure. The cytochrome P450 monooxygenase FUS8 participates in multiple oxidation processes at carbon C-20 and is able to use the FUS1 product as substrate, resulting in formation of 20-hydroxy-prefusarin. This reaction seems to be essential before the 2-pyrrolidone ring closure can be catalyzed by FUS2, generating 20-hydroxy-fusarin. FUS8 is able to further oxidizes carbon C-20 after ring closure, resulting in the formation of carboxy-fusarin C. As the last step, FUS9 methylates the hydroxyl group at C-21 to generate fusarin C. Fusarin C can then rearrange to epi-fusarin C, the (z)-isomers, and fusarin A and fusarin D. This is 20-hydroxy-prefusarin hydrolase FUS2 from Gibberella moniliformis (strain M3125 / FGSC 7600) (Maize ear and stalk rot fungus).